The sequence spans 111 residues: UPF0060 membrane protein HCH_03337 (111 aa).

Helical transmembrane passes span 8 to 28, 33 to 53, 65 to 85, and 88 to 108; these read LLFA…WLVI, SLWL…LLTL, YGGM…GVGL, and FDFL…LQPI.

This sequence belongs to the UPF0060 family.

The protein resides in the cell inner membrane. In Hahella chejuensis (strain KCTC 2396), this protein is UPF0060 membrane protein HCH_03337.